The following is a 498-amino-acid chain: MRLAVIRYIWLLVALLVALEPAYVHPDEHMQSVEVMMQKIFGLRGTVPWEFQPEYAARSFAPLWIFMGPALVAARLFNAGPRVVLGLLRIQGYFLYVSLTRVAVELVGRTKLRRSMAAFLLSTTYVVGAFQSHTFSNSIETLLAVAAVGLLEVVIADGRAGHRHVRISGVLGFLIALGLFNRVTFAGYLGLPCIVAFWQFYRRQWRSLAALLLCFLLTSGACIWIDTLSYGTSEWVITPLNNLLYNMDEENLAQHGLHPRYTHILVNLPMLLGPGLLFALGGIQRLSLPLLSCVSGVATLSLFKHQEARFLLPVVPLFLMSVDLTKLRTVSLTLTLKLWLAFNGLMVVIMGVGHQRGVITALHQLREEPIGVQVWWKTYSPPTWVLMNEALTVSTTNFVGDDERIDEVPLDVTRNHVIDLKGCNIELLNHTLSQFIAAGSKVHLIVPDSVAKKTALLTKRYGFDIHREFRTLVHLDLDHLDWSEPSSFTPGLSIYTVT.

Helical transmembrane passes span 4-24, 60-80, 118-134, 135-155, 169-189, 208-228, 261-281, 286-303, and 332-352; these read AVIRYIWLLVALLVALEPAYV, FAPLWIFMGPALVAARLFNAG, AFLLSTTYVVGAFQSHT, FSNSIETLLAVAAVGLLEVVI, GVLGFLIALGLFNRVTFAGYL, LAALLLCFLLTSGACIWIDTL, YTHILVNLPMLLGPGLLFALG, LSLPLLSCVSGVATLSLF, and LTLTLKLWLAFNGLMVVIMGV. Asn-429 carries N-linked (GlcNAc...) asparagine glycosylation.

It belongs to the glycosyltransferase 22 family. PIGZ subfamily.

The protein resides in the endoplasmic reticulum membrane. It functions in the pathway glycolipid biosynthesis; glycosylphosphatidylinositol-anchor biosynthesis. In terms of biological role, alpha-1,2-mannosyltransferase involved in glycosylphosphatidylinositol-anchor biosynthesis. Transfers a fourth mannose to trimannosyl-GPIs during GPI precursor assembly. The presence of a fourth mannose in GPI is essential in fungi. This is GPI mannosyltransferase 4 (SMP3) from Eremothecium gossypii (strain ATCC 10895 / CBS 109.51 / FGSC 9923 / NRRL Y-1056) (Yeast).